A 917-amino-acid chain; its full sequence is Catenin alpha (917 aa).

Phosphothreonine is present on residues Thr643 and Thr645. Residues Ser659 and Ser662 each carry the phosphoserine modification. Positions 878 to 890 are enriched in basic and acidic residues; that stretch reads PLVRPEKPEEVRA. A disordered region spans residues 878–905; that stretch reads PLVRPEKPEEVRAKVRKGSQKKVQNPIH.

It belongs to the vinculin/alpha-catenin family. As to quaternary structure, interacts with arm/armadillo protein. In terms of processing, rapidly phosphorylated by CK2 and more slowly by CK1.

Its subcellular location is the cytoplasm. The protein localises to the cytoskeleton. It localises to the cell junction. The protein resides in the adherens junction. It is found in the cell membrane. Functionally, associates with the cytoplasmic domain of a variety of cadherins. The association of catenins to cadherins produces a complex which is linked to the actin filament network, and which seems to be of primary importance for cadherins cell-adhesion properties. The polypeptide is Catenin alpha (Drosophila melanogaster (Fruit fly)).